A 182-amino-acid polypeptide reads, in one-letter code: Probable phosphoheptose isomerase (182 aa).

Residues 29–182 (ISSAISSGNK…MICAMIDEKF (154 aa)) form the SIS domain. 44–46 (NGG) contacts substrate. 2 residues coordinate Zn(2+): histidine 53 and glutamate 57. Residues glutamate 57, 86–87 (ND), 112–114 (STS), serine 117, and glutamine 164 contribute to the substrate site. Zn(2+)-binding residues include glutamine 164 and histidine 172.

Belongs to the SIS family. GmhA subfamily. Zn(2+) is required as a cofactor.

The protein localises to the cytoplasm. It carries out the reaction 2 D-sedoheptulose 7-phosphate = D-glycero-alpha-D-manno-heptose 7-phosphate + D-glycero-beta-D-manno-heptose 7-phosphate. Its pathway is carbohydrate biosynthesis; D-glycero-D-manno-heptose 7-phosphate biosynthesis; D-glycero-alpha-D-manno-heptose 7-phosphate and D-glycero-beta-D-manno-heptose 7-phosphate from sedoheptulose 7-phosphate: step 1/1. Catalyzes the isomerization of sedoheptulose 7-phosphate in D-glycero-D-manno-heptose 7-phosphate. This chain is Probable phosphoheptose isomerase, found in Thermoplasma acidophilum (strain ATCC 25905 / DSM 1728 / JCM 9062 / NBRC 15155 / AMRC-C165).